The sequence spans 88 residues: Small ribosomal subunit protein bS20 (88 aa).

The disordered stretch occupies residues 1 to 28 (MANTVQARKRARQAVKQNEHNSSLRSKL).

The protein belongs to the bacterial ribosomal protein bS20 family.

In terms of biological role, binds directly to 16S ribosomal RNA. The chain is Small ribosomal subunit protein bS20 from Polynucleobacter necessarius subsp. necessarius (strain STIR1).